A 545-amino-acid chain; its full sequence is CTP synthase (545 aa).

The amidoligase domain stretch occupies residues 1-267 (MTKFIFVTGG…AEQTLKLLQM (267 aa)). A CTP-binding site is contributed by serine 13. Residue serine 13 coordinates UTP. Residues 14-19 (SIGKGI) and aspartate 71 each bind ATP. Aspartate 71 and glutamate 141 together coordinate Mg(2+). CTP contacts are provided by residues 148–150 (DIE), 188–193 (KTKPTQ), and lysine 224. Residues 188-193 (KTKPTQ) and lysine 224 each bind UTP. A Glutamine amidotransferase type-1 domain is found at 292–534 (EIAIVGKYVS…VQAAIAQSHP (243 aa)). Glycine 354 contacts L-glutamine. Cysteine 381 acts as the Nucleophile; for glutamine hydrolysis in catalysis. L-glutamine is bound by residues 382–385 (LGMQ), glutamate 405, and arginine 462. Active-site residues include histidine 507 and glutamate 509.

The protein belongs to the CTP synthase family. Homotetramer.

The catalysed reaction is UTP + L-glutamine + ATP + H2O = CTP + L-glutamate + ADP + phosphate + 2 H(+). It catalyses the reaction L-glutamine + H2O = L-glutamate + NH4(+). It carries out the reaction UTP + NH4(+) + ATP = CTP + ADP + phosphate + 2 H(+). It functions in the pathway pyrimidine metabolism; CTP biosynthesis via de novo pathway; CTP from UDP: step 2/2. Allosterically activated by GTP, when glutamine is the substrate; GTP has no effect on the reaction when ammonia is the substrate. The allosteric effector GTP functions by stabilizing the protein conformation that binds the tetrahedral intermediate(s) formed during glutamine hydrolysis. Inhibited by the product CTP, via allosteric rather than competitive inhibition. Catalyzes the ATP-dependent amination of UTP to CTP with either L-glutamine or ammonia as the source of nitrogen. Regulates intracellular CTP levels through interactions with the four ribonucleotide triphosphates. In Trichormus variabilis (strain ATCC 29413 / PCC 7937) (Anabaena variabilis), this protein is CTP synthase.